Reading from the N-terminus, the 135-residue chain is Ribosome-binding factor A (135 aa).

The protein belongs to the RbfA family. In terms of assembly, monomer. Binds 30S ribosomal subunits, but not 50S ribosomal subunits or 70S ribosomes.

It is found in the cytoplasm. In terms of biological role, one of several proteins that assist in the late maturation steps of the functional core of the 30S ribosomal subunit. Associates with free 30S ribosomal subunits (but not with 30S subunits that are part of 70S ribosomes or polysomes). Required for efficient processing of 16S rRNA. May interact with the 5'-terminal helix region of 16S rRNA. The chain is Ribosome-binding factor A from Methylobacterium nodulans (strain LMG 21967 / CNCM I-2342 / ORS 2060).